We begin with the raw amino-acid sequence, 1495 residues long: ABC transporter C family member 12 (1495 aa).

The next 11 membrane-spanning stretches (helical) occupy residues 38–58 (VMLV…WIIF), 76–96 (VLGL…VMGI), 110–130 (FEVA…VLIG), 146–166 (FGVL…LPLK), 173–195 (ALYL…LIYI), 303–323 (FWLA…GPVI), 337–357 (AWVG…GVLC), 420–440 (GLWS…QQLG), 441–461 (VASL…TLII), 528–548 (FILN…FVLL), and 558–578 (FTSL…PNLL). Residues 303–583 (FWLAGIFKIG…LPNLLSQVVN (281 aa)) form the ABC transmembrane type-1 1 domain. Residues 615–839 (ISIKNGYFSW…GILFKKLMEN (225 aa)) enclose the ABC transporter 1 domain. An ATP-binding site is contributed by 650-657 (GGTGEGKT). The next 5 helical transmembrane spans lie at 907–927 (AVGG…TEVL), 949–969 (PGFY…VTFT), 1042–1062 (FALI…LLIL), 1140–1160 (LETL…LQNG), and 1166–1186 (AGFA…TSLL). The region spanning 914–1198 (VMILLACYLA…VLRQASRAEN (285 aa)) is the ABC transmembrane type-1 2 domain. Positions 1235–1469 (IKFEDVHLRY…DTSAFFRMVH (235 aa)) constitute an ABC transporter 2 domain. Position 1269 to 1276 (1269 to 1276 (GRTGAGKS)) interacts with ATP.

Belongs to the ABC transporter superfamily. ABCC family. Conjugate transporter (TC 3.A.1.208) subfamily. In terms of tissue distribution, ubiquitous.

Its subcellular location is the membrane. The enzyme catalyses ATP + H2O + xenobioticSide 1 = ADP + phosphate + xenobioticSide 2.. Functionally, pump for glutathione S-conjugates. The sequence is that of ABC transporter C family member 12 (ABCC12) from Arabidopsis thaliana (Mouse-ear cress).